Here is an 897-residue protein sequence, read N- to C-terminus: Probable bifunctional chitinase/lysozyme (897 aa).

The first 24 residues, 1–24 (MKLNIFTKSMIGMGLVCSALPALA), serve as a signal peptide directing secretion. The Chitin-binding type-3 1 domain occupies 25–91 (MEAWNNQQGG…SQFGNTLSCE (67 aa)). Disordered regions lie at residues 90–127 (CEKS…SNSS), 182–222 (TEIS…PADK), and 287–333 (QYGN…DSVN). Over residues 95–111 (SSSSSNSNTPASNTPAN) the composition is skewed to low complexity. 2 stretches are compositionally biased toward polar residues: residues 113-127 (GSAT…SNSS) and 182-197 (TEIS…TSAP). The 67-residue stretch at 128 to 194 (VVAWNKQQGG…SETSNPQSCT (67 aa)) folds into the Chitin-binding type-3 2 domain. Positions 198–216 (QPSPDVKPAPDVKPAPDVQ) are enriched in pro residues. Residues 229–295 (VVAWKGQEGS…SQYGNPGSCS (67 aa)) form the Chitin-binding type-3 3 domain. Residues 309–318 (DPTPETPVTP) are compositionally biased toward pro residues. Over residues 322–333 (NSEPSTPADSVN) the composition is skewed to polar residues. 2 Chitin-binding type-3 domains span residues 337–403 (LQAW…TTCE) and 459–529 (AKAW…PQFN). One can recognise a GH18 domain in the interval 586–877 (KHVYAPYVDF…TNLSPEFHGL (292 aa)). C628 and C673 are joined by a disulfide. The active-site Proton donor is the E700.

The protein belongs to the glycosyl hydrolase 18 family. Chitinase class II subfamily.

It is found in the periplasm. The catalysed reaction is Random endo-hydrolysis of N-acetyl-beta-D-glucosaminide (1-&gt;4)-beta-linkages in chitin and chitodextrins.. It carries out the reaction Hydrolysis of (1-&gt;4)-beta-linkages between N-acetylmuramic acid and N-acetyl-D-glucosamine residues in a peptidoglycan and between N-acetyl-D-glucosamine residues in chitodextrins.. Bifunctional enzyme with lysozyme/chitinase activity. The protein is Probable bifunctional chitinase/lysozyme (chiA) of Escherichia coli (strain K12).